A 522-amino-acid chain; its full sequence is Glutamate--cysteine ligase, chloroplastic (522 aa).

A chloroplast-targeting transit peptide spans 1–45; the sequence is MALMSQAGSSHCIYSEKMKCISGHSSITSNMEMLKMKDICFGNIS. Cys186 and Cys406 are oxidised to a cystine.

It belongs to the carboxylate-amine ligase family. Glutamate--cysteine ligase type 2 subfamily. As to quaternary structure, homodimer or monomer when oxidized or reduced, respectively. Post-translationally, the Cys-186-Cys-406 disulfide bridge is known to modulate the enzyme activity according to the redox status. The oxidized form constitutes the active enzyme.

Its subcellular location is the plastid. The protein localises to the chloroplast. The enzyme catalyses L-cysteine + L-glutamate + ATP = gamma-L-glutamyl-L-cysteine + ADP + phosphate + H(+). Its pathway is sulfur metabolism; glutathione biosynthesis; glutathione from L-cysteine and L-glutamate: step 1/2. This chain is Glutamate--cysteine ligase, chloroplastic (GSH1), found in Nicotiana tabacum (Common tobacco).